Here is a 362-residue protein sequence, read N- to C-terminus: Biotin synthase (362 aa).

The Radical SAM core domain occupies Asn39–Arg267. Residues Cys54, Cys58, and Cys61 each coordinate [4Fe-4S] cluster. Cys98, Cys130, Cys190, and Arg262 together coordinate [2Fe-2S] cluster. The interval Pro317 to Asn362 is disordered. A compositionally biased stretch (basic and acidic residues) spans Glu328 to Leu354.

The protein belongs to the radical SAM superfamily. Biotin synthase family. As to quaternary structure, homodimer. The cofactor is [4Fe-4S] cluster. [2Fe-2S] cluster serves as cofactor.

The catalysed reaction is (4R,5S)-dethiobiotin + (sulfur carrier)-SH + 2 reduced [2Fe-2S]-[ferredoxin] + 2 S-adenosyl-L-methionine = (sulfur carrier)-H + biotin + 2 5'-deoxyadenosine + 2 L-methionine + 2 oxidized [2Fe-2S]-[ferredoxin]. It functions in the pathway cofactor biosynthesis; biotin biosynthesis; biotin from 7,8-diaminononanoate: step 2/2. Its function is as follows. Catalyzes the conversion of dethiobiotin (DTB) to biotin by the insertion of a sulfur atom into dethiobiotin via a radical-based mechanism. The chain is Biotin synthase from Flavobacterium psychrophilum (strain ATCC 49511 / DSM 21280 / CIP 103535 / JIP02/86).